A 229-amino-acid chain; its full sequence is 2,3-bisphosphoglycerate-dependent phosphoglycerate mutase 2 (229 aa).

Substrate is bound by residues 8–15 (RHGQSEWN), 21–22 (TG), R60, 87–90 (ERHY), K98, 114–115 (RR), and 183–184 (GN). The active-site Tele-phosphohistidine intermediate is H9. E87 serves as the catalytic Proton donor/acceptor.

Belongs to the phosphoglycerate mutase family. BPG-dependent PGAM subfamily.

It catalyses the reaction (2R)-2-phosphoglycerate = (2R)-3-phosphoglycerate. Its pathway is carbohydrate degradation; glycolysis; pyruvate from D-glyceraldehyde 3-phosphate: step 3/5. Its function is as follows. Catalyzes the interconversion of 2-phosphoglycerate and 3-phosphoglycerate. This is 2,3-bisphosphoglycerate-dependent phosphoglycerate mutase 2 from Latilactobacillus sakei subsp. sakei (strain 23K) (Lactobacillus sakei subsp. sakei).